A 131-amino-acid chain; its full sequence is Sec-independent protein translocase protein TatB (131 aa).

Residues 2–22 (LGSLSWEHMLVLVVVGLVVLG) form a helical membrane-spanning segment. Positions 96-131 (AFDRPVNGAAAQPPPAPAPPPEPHRSGQTPFDADAT) are disordered. Residues 107–116 (QPPPAPAPPP) show a composition bias toward pro residues.

It belongs to the TatB family. In terms of assembly, the Tat system comprises two distinct complexes: a TatABC complex, containing multiple copies of TatA, TatB and TatC subunits, and a separate TatA complex, containing only TatA subunits. Substrates initially bind to the TatABC complex, which probably triggers association of the separate TatA complex to form the active translocon.

It is found in the cell membrane. Part of the twin-arginine translocation (Tat) system that transports large folded proteins containing a characteristic twin-arginine motif in their signal peptide across membranes. Together with TatC, TatB is part of a receptor directly interacting with Tat signal peptides. TatB may form an oligomeric binding site that transiently accommodates folded Tat precursor proteins before their translocation. This Mycolicibacterium paratuberculosis (strain ATCC BAA-968 / K-10) (Mycobacterium paratuberculosis) protein is Sec-independent protein translocase protein TatB.